Reading from the N-terminus, the 337-residue chain is Phenylalanine--tRNA ligase alpha subunit (337 aa).

Residue Glu252 participates in Mg(2+) binding.

It belongs to the class-II aminoacyl-tRNA synthetase family. Phe-tRNA synthetase alpha subunit type 1 subfamily. As to quaternary structure, tetramer of two alpha and two beta subunits. The cofactor is Mg(2+).

The protein localises to the cytoplasm. It catalyses the reaction tRNA(Phe) + L-phenylalanine + ATP = L-phenylalanyl-tRNA(Phe) + AMP + diphosphate + H(+). The sequence is that of Phenylalanine--tRNA ligase alpha subunit from Francisella tularensis subsp. mediasiatica (strain FSC147).